Reading from the N-terminus, the 165-residue chain is Large ribosomal subunit protein uL10 (165 aa).

It belongs to the universal ribosomal protein uL10 family. In terms of assembly, part of the ribosomal stalk of the 50S ribosomal subunit. The N-terminus interacts with L11 and the large rRNA to form the base of the stalk. The C-terminus forms an elongated spine to which L12 dimers bind in a sequential fashion forming a multimeric L10(L12)X complex.

In terms of biological role, forms part of the ribosomal stalk, playing a central role in the interaction of the ribosome with GTP-bound translation factors. The chain is Large ribosomal subunit protein uL10 from Burkholderia mallei (strain NCTC 10229).